The chain runs to 274 residues: Rhamnulose-1-phosphate aldolase (274 aa).

The active site involves Glu117. Positions 141, 143, and 212 each coordinate Zn(2+).

Belongs to the aldolase class II family. RhaD subfamily. Homotetramer. Requires Zn(2+) as cofactor.

It is found in the cytoplasm. The catalysed reaction is L-rhamnulose 1-phosphate = (S)-lactaldehyde + dihydroxyacetone phosphate. It participates in carbohydrate degradation; L-rhamnose degradation; glycerone phosphate from L-rhamnose: step 3/3. Catalyzes the reversible cleavage of L-rhamnulose-1-phosphate to dihydroxyacetone phosphate (DHAP) and L-lactaldehyde. This Escherichia coli O7:K1 (strain IAI39 / ExPEC) protein is Rhamnulose-1-phosphate aldolase.